We begin with the raw amino-acid sequence, 204 residues long: UPF0637 protein lwe1043 (204 aa).

This sequence belongs to the UPF0637 family.

The polypeptide is UPF0637 protein lwe1043 (Listeria welshimeri serovar 6b (strain ATCC 35897 / DSM 20650 / CCUG 15529 / CIP 8149 / NCTC 11857 / SLCC 5334 / V8)).